A 119-amino-acid chain; its full sequence is Large ribosomal subunit protein bL20 (119 aa).

The protein belongs to the bacterial ribosomal protein bL20 family.

In terms of biological role, binds directly to 23S ribosomal RNA and is necessary for the in vitro assembly process of the 50S ribosomal subunit. It is not involved in the protein synthesizing functions of that subunit. This Delftia acidovorans (strain DSM 14801 / SPH-1) protein is Large ribosomal subunit protein bL20.